A 97-amino-acid polypeptide reads, in one-letter code: NADH-ubiquinone oxidoreductase chain 4L (97 aa).

3 consecutive transmembrane segments (helical) span residues 1-21 (MSMF…YVFC), 28-48 (LVVL…IVLF), and 57-77 (FFPV…LSIL).

Belongs to the complex I subunit 4L family.

Its subcellular location is the mitochondrion membrane. The enzyme catalyses a ubiquinone + NADH + 5 H(+)(in) = a ubiquinol + NAD(+) + 4 H(+)(out). Core subunit of the mitochondrial membrane respiratory chain NADH dehydrogenase (Complex I) that is believed to belong to the minimal assembly required for catalysis. Complex I functions in the transfer of electrons from NADH to the respiratory chain. The immediate electron acceptor for the enzyme is believed to be ubiquinone. The protein is NADH-ubiquinone oxidoreductase chain 4L (ND4L) of Locusta migratoria (Migratory locust).